Reading from the N-terminus, the 139-residue chain is D-ribose pyranase (139 aa).

Catalysis depends on His-20, which acts as the Proton donor. Residues Asp-28, His-106, and 128 to 130 (YAN) each bind substrate.

Belongs to the RbsD / FucU family. RbsD subfamily. In terms of assembly, homodecamer.

It is found in the cytoplasm. The enzyme catalyses beta-D-ribopyranose = beta-D-ribofuranose. It participates in carbohydrate metabolism; D-ribose degradation; D-ribose 5-phosphate from beta-D-ribopyranose: step 1/2. Functionally, catalyzes the interconversion of beta-pyran and beta-furan forms of D-ribose. In Salmonella choleraesuis (strain SC-B67), this protein is D-ribose pyranase.